The following is a 489-amino-acid chain: 3-octaprenyl-4-hydroxybenzoate carboxy-lyase (489 aa).

A Mn(2+)-binding site is contributed by asparagine 172. Prenylated FMN contacts are provided by residues 175 to 177 (IYR), 189 to 191 (RWL), and 194 to 195 (RG). Glutamate 238 is a binding site for Mn(2+). The active-site Proton donor is aspartate 287.

Belongs to the UbiD family. As to quaternary structure, homohexamer. It depends on prenylated FMN as a cofactor. The cofactor is Mn(2+).

The protein localises to the cell membrane. It catalyses the reaction a 4-hydroxy-3-(all-trans-polyprenyl)benzoate + H(+) = a 2-(all-trans-polyprenyl)phenol + CO2. It functions in the pathway cofactor biosynthesis; ubiquinone biosynthesis. Its function is as follows. Catalyzes the decarboxylation of 3-octaprenyl-4-hydroxy benzoate to 2-octaprenylphenol, an intermediate step in ubiquinone biosynthesis. The chain is 3-octaprenyl-4-hydroxybenzoate carboxy-lyase from Aeromonas hydrophila subsp. hydrophila (strain ATCC 7966 / DSM 30187 / BCRC 13018 / CCUG 14551 / JCM 1027 / KCTC 2358 / NCIMB 9240 / NCTC 8049).